Consider the following 160-residue polypeptide: Transmembrane protein 216 (160 aa).

4 helical membrane-spanning segments follow: residues 41-61, 68-88, 101-121, and 134-154; these read WYFA…GVIL, LILD…RLFY, LFVS…YLLL, and AVLL…ISIF.

As to quaternary structure, part of the tectonic-like complex (also named B9 complex).

It is found in the membrane. The protein localises to the cytoplasm. The protein resides in the cytoskeleton. Its subcellular location is the cilium basal body. Its function is as follows. Part of the tectonic-like complex which is required for tissue-specific ciliogenesis and may regulate ciliary membrane composition. This chain is Transmembrane protein 216 (tmem216), found in Danio rerio (Zebrafish).